A 284-amino-acid chain; its full sequence is Cell wall mannoprotein 1 (284 aa).

Residues 1 to 17 (MRFSALLVTLGLTGALA) form the signal peptide. The segment covering 176 to 234 (SSTGTASSSAPATETATATETSTATGTVTETATSTPVIPTGTASGSASATPSTTATPTT) has biased composition (low complexity). The interval 176-252 (SSTGTASSSA…SSTGTATAST (77 aa)) is disordered.

Belongs to the cell wall mannoprotein 1 family. Galactomannoprotein, glycosylated.

The protein localises to the secreted. Its subcellular location is the cell wall. Functionally, constitutive protein of the cell wall. Antigen target of host humoral immune response. The chain is Cell wall mannoprotein 1 from Aspergillus fumigatus (Neosartorya fumigata).